The chain runs to 95 residues: Large ribosomal subunit protein eL43 (95 aa).

Residues 38–59 (CPDCGSEAVSREGTGIWQCGKC) form a C4-type zinc finger.

This sequence belongs to the eukaryotic ribosomal protein eL43 family. Zn(2+) is required as a cofactor.

In Halobacterium salinarum (strain ATCC 29341 / DSM 671 / R1), this protein is Large ribosomal subunit protein eL43.